A 263-amino-acid chain; its full sequence is 3-methyl-2-oxobutanoate hydroxymethyltransferase (263 aa).

Mg(2+) contacts are provided by Asp-45 and Asp-84. Residues 45 to 46 (DS), Asp-84, and Lys-112 contribute to the 3-methyl-2-oxobutanoate site. Residue Glu-114 coordinates Mg(2+). Glu-180 functions as the Proton acceptor in the catalytic mechanism.

It belongs to the PanB family. In terms of assembly, homodecamer; pentamer of dimers. It depends on Mg(2+) as a cofactor.

The protein resides in the cytoplasm. The catalysed reaction is 3-methyl-2-oxobutanoate + (6R)-5,10-methylene-5,6,7,8-tetrahydrofolate + H2O = 2-dehydropantoate + (6S)-5,6,7,8-tetrahydrofolate. It functions in the pathway cofactor biosynthesis; (R)-pantothenate biosynthesis; (R)-pantoate from 3-methyl-2-oxobutanoate: step 1/2. In terms of biological role, catalyzes the reversible reaction in which hydroxymethyl group from 5,10-methylenetetrahydrofolate is transferred onto alpha-ketoisovalerate to form ketopantoate. In Klebsiella pneumoniae subsp. pneumoniae (strain ATCC 700721 / MGH 78578), this protein is 3-methyl-2-oxobutanoate hydroxymethyltransferase.